Reading from the N-terminus, the 150-residue chain is Infection structure-specific protein 24 (150 aa).

Its function is as follows. Involved in the development of infection structures. The germ tube elongates across the leaf surface of the infected plant until it recognizes a stomate. Physical stimuli provided by the stomate induce differentiation of the germ tube to form a series of infection structures involved in host colonization. This Uromyces appendiculatus (Rust fungus) protein is Infection structure-specific protein 24 (INF24).